The chain runs to 454 residues: DNA repair protein RadA (454 aa).

The C4-type zinc finger occupies 11 to 28 (CTECGTHSPKWLGQCSGC). 94-101 (GEPGIGKS) lines the ATP pocket. The RadA KNRFG motif motif lies at 251–255 (KNRFG). The lon-protease-like stretch occupies residues 350-454 (DVFLSIAGGL…TIKDAVRLLQ (105 aa)).

The protein belongs to the RecA family. RadA subfamily.

Its function is as follows. DNA-dependent ATPase involved in processing of recombination intermediates, plays a role in repairing DNA breaks. Stimulates the branch migration of RecA-mediated strand transfer reactions, allowing the 3' invading strand to extend heteroduplex DNA faster. Binds ssDNA in the presence of ADP but not other nucleotides, has ATPase activity that is stimulated by ssDNA and various branched DNA structures, but inhibited by SSB. Does not have RecA's homology-searching function. The protein is DNA repair protein RadA of Chlamydia trachomatis serovar D (strain ATCC VR-885 / DSM 19411 / UW-3/Cx).